Here is a 165-residue protein sequence, read N- to C-terminus: Trypsin alpha-3 (165 aa).

In terms of domain architecture, Peptidase S1 spans 1-163; the sequence is NSGGVLVSVA…LRSWVVSAAN (163 aa). The Charge relay system role is filled by Asp-26. Disulfide bonds link Cys-89–Cys-106 and Cys-115–Cys-139. Ser-119 functions as the Charge relay system in the catalytic mechanism.

This sequence belongs to the peptidase S1 family.

It is found in the secreted. The protein localises to the extracellular space. The catalysed reaction is Preferential cleavage: Arg-|-Xaa, Lys-|-Xaa.. In Lucilia cuprina (Green bottle fly), this protein is Trypsin alpha-3.